The primary structure comprises 336 residues: Glucokinase (336 aa).

Residue 12 to 17 (ADIGGT) participates in ATP binding.

This sequence belongs to the bacterial glucokinase family.

The protein resides in the cytoplasm. The catalysed reaction is D-glucose + ATP = D-glucose 6-phosphate + ADP + H(+). The polypeptide is Glucokinase (Helicobacter pylori (strain J99 / ATCC 700824) (Campylobacter pylori J99)).